The following is a 233-amino-acid chain: Translation initiation factor IF-3 (233 aa).

Disordered stretches follow at residues 1–21 (MAIQ…RTNR) and 184–233 (LQSQ…AAQR). Residues 193 to 211 (AAAAAAPAAAPAAPAAGAP) are compositionally biased toward low complexity. Residues 212-223 (APAPAPAAPAPA) show a composition bias toward pro residues. The segment covering 224-233 (PAAADPAAQR) has biased composition (low complexity).

This sequence belongs to the IF-3 family. In terms of assembly, monomer.

The protein localises to the cytoplasm. IF-3 binds to the 30S ribosomal subunit and shifts the equilibrium between 70S ribosomes and their 50S and 30S subunits in favor of the free subunits, thus enhancing the availability of 30S subunits on which protein synthesis initiation begins. This chain is Translation initiation factor IF-3, found in Anaeromyxobacter dehalogenans (strain 2CP-C).